The primary structure comprises 859 residues: DNA-directed RNA polymerase subunit Rpo1C (859 aa).

The protein belongs to the RNA polymerase beta' chain family. Part of the RNA polymerase complex. This protein undergoes a protein self splicing that involves a post-translational excision of the intervening region (intein) followed by peptide ligation.

The protein resides in the cytoplasm. The enzyme catalyses RNA(n) + a ribonucleoside 5'-triphosphate = RNA(n+1) + diphosphate. Functionally, DNA-dependent RNA polymerase (RNAP) catalyzes the transcription of DNA into RNA using the four ribonucleoside triphosphates as substrates. Forms part of the jaw domain. This Methanocaldococcus jannaschii (strain ATCC 43067 / DSM 2661 / JAL-1 / JCM 10045 / NBRC 100440) (Methanococcus jannaschii) protein is DNA-directed RNA polymerase subunit Rpo1C.